Here is a 180-residue protein sequence, read N- to C-terminus: D(1A) dopamine receptor (180 aa).

The chain crosses the membrane as a helical span at residues 1–10 (NTLLVCAAVI). The Cytoplasmic portion of the chain corresponds to 11 to 21 (RFRHLRSKVTN). The helical transmembrane segment at 22–48 (FFVISLAVSDLLVAVLVMPWKAVAEIA) threads the bilayer. Residues 49 to 57 (GFWPFGSFC) are Extracellular-facing. C57 and C147 form a disulfide bridge. The helical transmembrane segment at 58-80 (NIWVAFDIMCSTASILNLCVISV) threads the bilayer. At 81 to 99 (DRYWAISSPFRYERKMTPK) the chain is on the cytoplasmic side. A helical membrane pass occupies residues 100-124 (AAFILIGVAWTLSVLISFIPVQLSW). The Extracellular segment spans residues 125 to 153 (HKAKPTSPPDGNATSLDETVDNCDSSLSR). N-linked (GlcNAc...) asparagine glycosylation occurs at N136. The chain crosses the membrane as a helical span at residues 154 to 179 (TYSISSSLVNFYNPVAIMXVTYTRIH). Position 180 (R180) is a topological domain, cytoplasmic.

Belongs to the G-protein coupled receptor 1 family. As to quaternary structure, interacts with DNAJC14 via its C-terminus. Interacts with DRD2. Interacts with DORIP1.

It is found in the cell membrane. The protein localises to the endoplasmic reticulum membrane. The protein resides in the cell projection. Its subcellular location is the cilium membrane. In terms of biological role, dopamine receptor whose activity is mediated by G proteins which activate adenylyl cyclase. In Oryctolagus cuniculus (Rabbit), this protein is D(1A) dopamine receptor (DRD1).